The primary structure comprises 192 residues: Phosphoheptose isomerase (192 aa).

In terms of domain architecture, SIS spans 37–192 (LADSFKAGGK…IQLIEKEMVK (156 aa)). 52-54 (NGG) contacts substrate. The Zn(2+) site is built by histidine 61 and glutamate 65. Residues glutamate 65, 93-94 (ND), 119-121 (STS), serine 124, and glutamine 172 contribute to the substrate site. Zn(2+) is bound by residues glutamine 172 and histidine 180.

Belongs to the SIS family. GmhA subfamily. In terms of assembly, homotetramer. It depends on Zn(2+) as a cofactor.

It localises to the cytoplasm. It carries out the reaction 2 D-sedoheptulose 7-phosphate = D-glycero-alpha-D-manno-heptose 7-phosphate + D-glycero-beta-D-manno-heptose 7-phosphate. The protein operates within carbohydrate biosynthesis; D-glycero-D-manno-heptose 7-phosphate biosynthesis; D-glycero-alpha-D-manno-heptose 7-phosphate and D-glycero-beta-D-manno-heptose 7-phosphate from sedoheptulose 7-phosphate: step 1/1. Catalyzes the isomerization of sedoheptulose 7-phosphate in D-glycero-D-manno-heptose 7-phosphate. The chain is Phosphoheptose isomerase from Salmonella dublin (strain CT_02021853).